The sequence spans 402 residues: Succinyl-diaminopimelate desuccinylase (402 aa).

Residue His88 coordinates Zn(2+). Asp90 is an active-site residue. Asp121 is a binding site for Zn(2+). Glu155 functions as the Proton acceptor in the catalytic mechanism. Residues Glu156, Glu184, and His374 each contribute to the Zn(2+) site.

The protein belongs to the peptidase M20A family. DapE subfamily. In terms of assembly, homodimer. Zn(2+) serves as cofactor. The cofactor is Co(2+).

The enzyme catalyses N-succinyl-(2S,6S)-2,6-diaminopimelate + H2O = (2S,6S)-2,6-diaminopimelate + succinate. It participates in amino-acid biosynthesis; L-lysine biosynthesis via DAP pathway; LL-2,6-diaminopimelate from (S)-tetrahydrodipicolinate (succinylase route): step 3/3. Its function is as follows. Catalyzes the hydrolysis of N-succinyl-L,L-diaminopimelic acid (SDAP), forming succinate and LL-2,6-diaminopimelate (DAP), an intermediate involved in the bacterial biosynthesis of lysine and meso-diaminopimelic acid, an essential component of bacterial cell walls. In Psychrobacter sp. (strain PRwf-1), this protein is Succinyl-diaminopimelate desuccinylase.